The following is a 178-amino-acid chain: ATP synthase subunit delta (178 aa).

The protein belongs to the ATPase delta chain family. F-type ATPases have 2 components, F(1) - the catalytic core - and F(0) - the membrane proton channel. F(1) has five subunits: alpha(3), beta(3), gamma(1), delta(1), epsilon(1). F(0) has three main subunits: a(1), b(2) and c(10-14). The alpha and beta chains form an alternating ring which encloses part of the gamma chain. F(1) is attached to F(0) by a central stalk formed by the gamma and epsilon chains, while a peripheral stalk is formed by the delta and b chains.

The protein resides in the cell inner membrane. In terms of biological role, f(1)F(0) ATP synthase produces ATP from ADP in the presence of a proton or sodium gradient. F-type ATPases consist of two structural domains, F(1) containing the extramembraneous catalytic core and F(0) containing the membrane proton channel, linked together by a central stalk and a peripheral stalk. During catalysis, ATP synthesis in the catalytic domain of F(1) is coupled via a rotary mechanism of the central stalk subunits to proton translocation. Its function is as follows. This protein is part of the stalk that links CF(0) to CF(1). It either transmits conformational changes from CF(0) to CF(1) or is implicated in proton conduction. The sequence is that of ATP synthase subunit delta from Pseudomonas entomophila (strain L48).